A 436-amino-acid chain; its full sequence is Nicotinate phosphoribosyltransferase (436 aa).

At H231 the chain carries Phosphohistidine; by autocatalysis.

This sequence belongs to the NAPRTase family. In terms of processing, transiently phosphorylated on a His residue during the reaction cycle. Phosphorylation strongly increases the affinity for substrates and increases the rate of nicotinate D-ribonucleotide production. Dephosphorylation regenerates the low-affinity form of the enzyme, leading to product release.

It catalyses the reaction nicotinate + 5-phospho-alpha-D-ribose 1-diphosphate + ATP + H2O = nicotinate beta-D-ribonucleotide + ADP + phosphate + diphosphate. The protein operates within cofactor biosynthesis; NAD(+) biosynthesis; nicotinate D-ribonucleotide from nicotinate: step 1/1. Catalyzes the synthesis of beta-nicotinate D-ribonucleotide from nicotinate and 5-phospho-D-ribose 1-phosphate at the expense of ATP. This chain is Nicotinate phosphoribosyltransferase, found in Vibrio parahaemolyticus serotype O3:K6 (strain RIMD 2210633).